We begin with the raw amino-acid sequence, 307 residues long: Ribosomal protein L11 methyltransferase (307 aa).

Positions 162, 183, 205, and 244 each coordinate S-adenosyl-L-methionine.

The protein belongs to the methyltransferase superfamily. PrmA family.

The protein resides in the cytoplasm. It carries out the reaction L-lysyl-[protein] + 3 S-adenosyl-L-methionine = N(6),N(6),N(6)-trimethyl-L-lysyl-[protein] + 3 S-adenosyl-L-homocysteine + 3 H(+). Methylates ribosomal protein L11. The sequence is that of Ribosomal protein L11 methyltransferase from Bordetella parapertussis (strain 12822 / ATCC BAA-587 / NCTC 13253).